A 347-amino-acid polypeptide reads, in one-letter code: Extracellular exo-alpha-(1-&gt;5)-L-arabinofuranosidase ArbA (347 aa).

An N-terminal signal peptide occupies residues 1–31; the sequence is MPTHHPITRQHWHHSWLSALALLCASLACGA. Substrate is bound at residue Asp-35. Catalysis depends on Asp-38, which acts as the Proton acceptor. Substrate is bound by residues 90–92, 115–116, Asn-155, Ser-175, and Glu-221; these read DGH and GK. Residue Glu-221 is the Proton donor of the active site. His-291 is a Ca(2+) binding site. Position 316 (Gln-316) interacts with substrate.

This sequence belongs to the glycosyl hydrolase 43 family. As to quaternary structure, homodimer.

Its subcellular location is the secreted. The catalysed reaction is Hydrolysis of terminal non-reducing alpha-L-arabinofuranoside residues in alpha-L-arabinosides.. The protein operates within glycan metabolism; L-arabinan degradation. In terms of biological role, involved in the degradation of arabinan and is a key enzyme in the complete degradation of the plant cell wall. Catalyzes the cleavage of the terminal alpha-(1-&gt;5)-arabinofuranosyl bonds of linear arabinan and carboxymethylarabinan to produce almost exclusively arabinotriose. This Cellvibrio japonicus (strain Ueda107) (Pseudomonas fluorescens subsp. cellulosa) protein is Extracellular exo-alpha-(1-&gt;5)-L-arabinofuranosidase ArbA (arbA).